The chain runs to 1608 residues: DNA-directed RNA polymerase III subunit rpc2 (1608 aa).

The Zn(2+) site is built by Cys1557, Cys1560, Cys1569, and Cys1572. The C4-type zinc finger occupies 1557 to 1572 (CKNCGFLGYEGYCQYC).

Belongs to the RNA polymerase beta chain family. In terms of assembly, component of the RNA polymerase III (Pol III) complex. In terms of processing, this protein undergoes a protein self splicing that involves a post-translational excision of the intervening region (intein) followed by peptide ligation.

Its subcellular location is the nucleus. The catalysed reaction is RNA(n) + a ribonucleoside 5'-triphosphate = RNA(n+1) + diphosphate. Its function is as follows. DNA-dependent RNA polymerase catalyzes the transcription of DNA into RNA using the four ribonucleoside triphosphates as substrates. Second largest core component of RNA polymerase III which synthesizes small RNAs, such as 5S rRNA and tRNAs. Proposed to contribute to the polymerase catalytic activity and forms the polymerase active center together with the largest subunit. Pol III is composed of mobile elements and rpc2 is part of the core element with the central large cleft and probably a clamp element that moves to open and close the cleft. This Dictyostelium discoideum (Social amoeba) protein is DNA-directed RNA polymerase III subunit rpc2 (polr3b).